Consider the following 254-residue polypeptide: Cytokine-inducible SH2-containing protein (254 aa).

The region spanning 82-188 (WYWGSITASE…ATTPALPTPK (107 aa)) is the SH2 domain. The tract at residues 171–195 (TRSDSPDLATTPALPTPKEDAPGDP) is disordered. The 49-residue stretch at 205 to 253 (KLVQPFVRRSSTRSLQHLCRLVINRLVVDVDCLPLPRRMADYLRQYPFQ) folds into the SOCS box domain.

Stably associated with the tyrosine-phosphorylated IL3 receptor beta chain and tyrosine-phosphorylated EPO receptor (EPOR).

Its pathway is protein modification; protein ubiquitination. Functionally, SOCS family proteins form part of a classical negative feedback system that regulates cytokine signal transduction. CIS is involved in the negative regulation of cytokines that signal through the JAK-STAT5 pathway such as erythropoietin, prolactin and interleukin 3 (IL3) receptor. Inhibits STAT5 trans-activation by suppressing its tyrosine phosphorylation. May be a substrate recognition component of a SCF-like ECS (Elongin BC-CUL2/5-SOCS-box protein) E3 ubiquitin-protein ligase complex which mediates the ubiquitination and subsequent proteasomal degradation of target proteins. The chain is Cytokine-inducible SH2-containing protein (CISH) from Bos taurus (Bovine).